Reading from the N-terminus, the 431-residue chain is 5-methylthioadenosine/S-adenosylhomocysteine deaminase (431 aa).

2 residues coordinate Zn(2+): His60 and His62. Positions 89 and 182 each coordinate substrate. Position 209 (His209) interacts with Zn(2+). Residues Glu212 and Asp297 each contribute to the substrate site. Asp297 is a Zn(2+) binding site.

It belongs to the metallo-dependent hydrolases superfamily. MTA/SAH deaminase family. Requires Zn(2+) as cofactor.

The catalysed reaction is S-adenosyl-L-homocysteine + H2O + H(+) = S-inosyl-L-homocysteine + NH4(+). The enzyme catalyses S-methyl-5'-thioadenosine + H2O + H(+) = S-methyl-5'-thioinosine + NH4(+). Its function is as follows. Catalyzes the deamination of 5-methylthioadenosine and S-adenosyl-L-homocysteine into 5-methylthioinosine and S-inosyl-L-homocysteine, respectively. Is also able to deaminate adenosine. This Natronomonas pharaonis (strain ATCC 35678 / DSM 2160 / CIP 103997 / JCM 8858 / NBRC 14720 / NCIMB 2260 / Gabara) (Halobacterium pharaonis) protein is 5-methylthioadenosine/S-adenosylhomocysteine deaminase.